Consider the following 349-residue polypeptide: 1-acylglycerol-3-phosphate O-acyltransferase ABHD5 (349 aa).

The residue at position 2 (Ala2) is an N-acetylalanine. The AB hydrolase-1 domain maps to 77–184; the sequence is PLVLLHGFGG…LVEPWGFPER (108 aa). Residue Ser122 is modified to Phosphoserine. Residues 327–332 carry the HXXXXD motif motif; the sequence is HYVYAD.

This sequence belongs to the peptidase S33 family. ABHD4/ABHD5 subfamily. Interacts with ADRP, PLIN and PNPLA2. Interacts with PLIN5; promotes interaction with PNPLA2.

The protein resides in the cytoplasm. Its subcellular location is the lipid droplet. The catalysed reaction is a 1-acyl-sn-glycero-3-phosphate + an acyl-CoA = a 1,2-diacyl-sn-glycero-3-phosphate + CoA. The enzyme catalyses 1-(9Z-octadecenoyl)-sn-glycero-3-phosphate + (9Z)-octadecenoyl-CoA = 1,2-di-(9Z-octadecenoyl)-sn-glycero-3-phosphate + CoA. It catalyses the reaction 1-(9Z-octadecenoyl)-sn-glycero-3-phosphate + hexadecanoyl-CoA = 1-(9Z)-octadecenoyl-2-hexadecanoyl-sn-glycero-3-phosphate + CoA. It carries out the reaction 1-(9Z-octadecenoyl)-sn-glycero-3-phosphate + octadecanoyl-CoA = 1-(9Z-octadecenoyl)-2-octadecanoyl-sn-glycero-3-phosphate + CoA. The catalysed reaction is 1-(9Z-octadecenoyl)-sn-glycero-3-phosphate + (5Z,8Z,11Z,14Z)-eicosatetraenoyl-CoA = 1-(9Z)-octadecenoyl-2-(5Z,8Z,11Z,14Z)-eicosatetraenoyl-sn-glycero-3-phosphate + CoA. The enzyme catalyses eicosanoyl-CoA + 1-(9Z-octadecenoyl)-sn-glycero-3-phosphate = 1-(9Z)-octadecenoyl-2-eicosanoyl-sn-glycero-3-phosphate + CoA. It catalyses the reaction 1-hexadecanoyl-sn-glycero-3-phosphate + (9Z)-octadecenoyl-CoA = 1-hexadecanoyl-2-(9Z-octadecenoyl)-sn-glycero-3-phosphate + CoA. It carries out the reaction 1-octadecanoyl-sn-glycero-3-phosphate + (9Z)-octadecenoyl-CoA = 1-octadecanoyl-2-(9Z-octadecenoyl)-sn-glycero-3-phosphate + CoA. The catalysed reaction is 1-(5Z,8Z,11Z,14Z-eicosatetraenoyl)-sn-glycero-3-phosphate + (9Z)-octadecenoyl-CoA = 1-(5Z,8Z,11Z,14Z)-eicosatetraenoyl-2-(9Z)-octadecenoyl-sn-glycero-3-phosphate + CoA. Acyltransferase activity is inhibited by detergents such as Triton X-100 and 3-[(3-cholamidopropyl)dimethylammonio]-1-propanesulfonate (CHAPS). Acyltransferase activity is inhibited by the presence of magnesium and calcium. Functionally, coenzyme A-dependent lysophosphatidic acid acyltransferase that catalyzes the transfer of an acyl group on a lysophosphatidic acid. Functions preferentially with 1-oleoyl-lysophosphatidic acid followed by 1-palmitoyl-lysophosphatidic acid, 1-stearoyl-lysophosphatidic acid and 1-arachidonoyl-lysophosphatidic acid as lipid acceptor. Functions preferentially with arachidonoyl-CoA followed by oleoyl-CoA as acyl group donors. Functions in phosphatidic acid biosynthesis. May regulate the cellular storage of triacylglycerol through activation of the phospholipase PNPLA2. Involved in keratinocyte differentiation. Regulates lipid droplet fusion. The protein is 1-acylglycerol-3-phosphate O-acyltransferase ABHD5 of Pongo abelii (Sumatran orangutan).